We begin with the raw amino-acid sequence, 374 residues long: Cyclin-dependent kinase 9 (374 aa).

The region spanning 19–318 is the Protein kinase domain; the sequence is YEKLAKIGQG…SDDALNHDFF (300 aa). ATP contacts are provided by residues 25–33 and K48; that span reads IGQGTFGEV. D151 serves as the catalytic Proton acceptor. The tract at residues 345–374 is disordered; that stretch reads PRRRGHMPQQPANQNRNPATTSQSEFDRVF. A compositionally biased stretch (polar residues) spans 354–368; it reads QPANQNRNPATTSQS.

It belongs to the protein kinase superfamily. CMGC Ser/Thr protein kinase family. CDC2/CDKX subfamily. As to quaternary structure, component of the super elongation complex (SEC). Associates with ccnt1/cyclin-T1, ccnt2/cyclin-T2 or ccnk/cyclin-K to form active P-TEFb.

It localises to the nucleus. Its subcellular location is the cytoplasm. It is found in the PML body. The enzyme catalyses L-seryl-[protein] + ATP = O-phospho-L-seryl-[protein] + ADP + H(+). It carries out the reaction L-threonyl-[protein] + ATP = O-phospho-L-threonyl-[protein] + ADP + H(+). The catalysed reaction is [DNA-directed RNA polymerase] + ATP = phospho-[DNA-directed RNA polymerase] + ADP + H(+). Its function is as follows. Protein kinase involved in the regulation of transcription. Member of the cyclin-dependent kinase pair (CDK9/cyclin-T) complex, also called positive transcription elongation factor b (P-TEFb), which facilitates the transition from abortive to productive elongation by phosphorylating the CTD (C-terminal domain) of the large subunit of RNA polymerase II (RNAP II) polr2a, supt5h and rdbp. This complex is inactive when in the 7SK snRNP complex form. Regulates cytokine inducible transcription networks by facilitating promoter recognition of target transcription factors. P-TEFb is also involved in cotranscriptional histone modification, mRNA processing and mRNA export. The protein is Cyclin-dependent kinase 9 of Danio rerio (Zebrafish).